We begin with the raw amino-acid sequence, 3456 residues long: Genome polyprotein (3456 aa).

Residues 600 to 743 enclose the Peptidase S30 domain; it reads NVANIPLDDF…ATRLKQIQFY (144 aa). Residues histidine 640, aspartate 652, and serine 689 each act as for P1 proteinase activity in the active site. The Peptidase C6 domain occupies 1075–1196; that stretch reads VWEFNEGYCY…EGEMLTYKVG (122 aa). Catalysis depends on cysteine 1083, which acts as the For helper component proteinase activity. Residues 1094 to 1126 form an HAT 1 repeat; the sequence is FINEDEMEFYKNQMNQIVLNLGAWPTFEQYLVE. Histidine 1155 acts as the For helper component proteinase activity in catalysis. A Helicase ATP-binding domain is found at 1617 to 1768; sequence NIRTSGETDV…TRHKIKVETL (152 aa). 1630–1637 serves as a coordination point for ATP; sequence SGVGGGKS. Residues 1787–1947 enclose the Helicase C-terminal domain; that stretch reads DATSVGDVIL…GIKPVCDRVD (161 aa). At tyrosine 2304 the chain carries O-(5'-phospho-RNA)-tyrosine. Positions 2412–2636 constitute a Peptidase C4 domain; it reads AVDSHVGTPT…VEWSRLLPTT (225 aa). Active-site for nuclear inclusion protein A activity residues include histidine 2457, aspartate 2494, and cysteine 2566. An HAT 2 repeat occupies 2597–2629; the sequence is HIFEPVNETFIEMLAKMEYAKGFWKFNPELVEW. In terms of domain architecture, RdRp catalytic spans 2891–3011; the sequence is WVFIDCDGSR…NCPRSTANAI (121 aa). The stretch at 3082–3115 is one HAT 3 repeat; it reads LNAAYIESFGYEDLMTEIEKFAHFWAKKHGLNDV.

VPg is uridylylated by the polymerase and is covalently attached to the 5'-end of the genomic RNA. This uridylylated form acts as a nucleotide-peptide primer for the polymerase. In terms of processing, genome polyprotein of potyviruses undergoes post-translational proteolytic processing by the main proteinase NIa-pro resulting in the production of at least ten individual proteins. The P1 proteinase and the HC-pro cleave only their respective C-termini autocatalytically. 6K1 is essential for proper proteolytic separation of P3 from CI.

The protein localises to the host cytoplasmic vesicle. It is found in the virion. It carries out the reaction RNA(n) + a ribonucleoside 5'-triphosphate = RNA(n+1) + diphosphate. The catalysed reaction is Hydrolyzes glutaminyl bonds, and activity is further restricted by preferences for the amino acids in P6 - P1' that vary with the species of potyvirus, e.g. Glu-Xaa-Xaa-Tyr-Xaa-Gln-|-(Ser or Gly) for the enzyme from tobacco etch virus. The natural substrate is the viral polyprotein, but other proteins and oligopeptides containing the appropriate consensus sequence are also cleaved.. It catalyses the reaction Hydrolyzes a Gly-|-Gly bond at its own C-terminus, commonly in the sequence -Tyr-Xaa-Val-Gly-|-Gly, in the processing of the potyviral polyprotein.. Required for aphid transmission and also has proteolytic activity. Only cleaves a Gly-Gly dipeptide at its own C-terminus. Interacts with virions and aphid stylets. Acts as a suppressor of RNA-mediated gene silencing, also known as post-transcriptional gene silencing (PTGS), a mechanism of plant viral defense that limits the accumulation of viral RNAs. May have RNA-binding activity. Its function is as follows. Has helicase activity. It may be involved in replication. Functionally, indispensable for virus replication. In terms of biological role, mediates the cap-independent, EIF4E-dependent translation of viral genomic RNAs. Binds to the cap-binding site of host EIF4E and thus interferes with the host EIF4E-dependent mRNA export and translation. VPg-RNA directly binds EIF4E and is a template for transcription. Also forms trimeric complexes with EIF4E-EIF4G, which are templates for translation. Has RNA-binding and proteolytic activities. Its function is as follows. An RNA-dependent RNA polymerase that plays an essential role in the virus replication. Functionally, involved in aphid transmission, cell-to-cell and systemis movement, encapsidation of the viral RNA and in the regulation of viral RNA amplification. This Sweet potato mild mottle virus (isolate Salazar) (SPMMV) protein is Genome polyprotein.